A 445-amino-acid polypeptide reads, in one-letter code: tRNA modification GTPase MnmE (445 aa).

Residues Arg25, Glu83, and Lys121 each contribute to the (6S)-5-formyl-5,6,7,8-tetrahydrofolate site. A TrmE-type G domain is found at Gly217–Arg371. Residues Asn227 to Thr232, Ser246 to Thr252, and Asp271 to Gly274 contribute to the GTP site. Mg(2+) contacts are provided by Ser231 and Thr252. Lys445 lines the (6S)-5-formyl-5,6,7,8-tetrahydrofolate pocket.

This sequence belongs to the TRAFAC class TrmE-Era-EngA-EngB-Septin-like GTPase superfamily. TrmE GTPase family. In terms of assembly, homodimer. Heterotetramer of two MnmE and two MnmG subunits. The cofactor is K(+).

The protein resides in the cytoplasm. Exhibits a very high intrinsic GTPase hydrolysis rate. Involved in the addition of a carboxymethylaminomethyl (cmnm) group at the wobble position (U34) of certain tRNAs, forming tRNA-cmnm(5)s(2)U34. The chain is tRNA modification GTPase MnmE from Anaplasma phagocytophilum (strain HZ).